A 505-amino-acid chain; its full sequence is Trans-cinnamate 4-monooxygenase (505 aa).

Residues 3-23 (LLLLEKSLIAVFVAVILATVI) traverse the membrane as a helical segment. (E)-cinnamate-binding positions include 213–218 (RSRLAQ) and Ala306. Cys447 contacts heme.

The protein belongs to the cytochrome P450 family. Heme serves as cofactor. Expressed in roots, leaves, stems, flowers and siliques.

It localises to the membrane. It catalyses the reaction (E)-cinnamate + reduced [NADPH--hemoprotein reductase] + O2 = (E)-4-coumarate + oxidized [NADPH--hemoprotein reductase] + H2O + H(+). Its pathway is phenylpropanoid metabolism; trans-4-coumarate biosynthesis; trans-4-coumarate from trans-cinnamate: step 1/1. Its function is as follows. Catalyzes the first oxidative step of the phenylpropanoid pathway in higher plants by transforming trans-cinnamate into p-coumarate. The compounds formed by this pathway are essential components for lignification, pollination, and defense against ultraviolet light, predators and pathogens. In Arabidopsis thaliana (Mouse-ear cress), this protein is Trans-cinnamate 4-monooxygenase.